The chain runs to 876 residues: Alanine--tRNA ligase (876 aa).

Residue Lys-74 is modified to N6-acetyllysine. 4 residues coordinate Zn(2+): His-564, His-568, Cys-666, and His-670.

Belongs to the class-II aminoacyl-tRNA synthetase family. As to quaternary structure, homotetramer. It depends on Zn(2+) as a cofactor.

The protein localises to the cytoplasm. The enzyme catalyses tRNA(Ala) + L-alanine + ATP = L-alanyl-tRNA(Ala) + AMP + diphosphate. Its function is as follows. Catalyzes the attachment of alanine to tRNA(Ala) in a two-step reaction: alanine is first activated by ATP to form Ala-AMP and then transferred to the acceptor end of tRNA(Ala). Also edits incorrectly charged Ser-tRNA(Ala) and Gly-tRNA(Ala) via its editing domain. The chain is Alanine--tRNA ligase from Shigella boydii serotype 4 (strain Sb227).